The primary structure comprises 782 residues: Endonuclease MutS2 (782 aa).

336–343 (GPNTGGKT) provides a ligand contact to ATP. Residues 707–782 (LDLRGYRYED…GFGVTVATLK (76 aa)) form the Smr domain.

This sequence belongs to the DNA mismatch repair MutS family. MutS2 subfamily. As to quaternary structure, homodimer. Binds to stalled ribosomes, contacting rRNA.

In terms of biological role, endonuclease that is involved in the suppression of homologous recombination and thus may have a key role in the control of bacterial genetic diversity. Functionally, acts as a ribosome collision sensor, splitting the ribosome into its 2 subunits. Detects stalled/collided 70S ribosomes which it binds and splits by an ATP-hydrolysis driven conformational change. Acts upstream of the ribosome quality control system (RQC), a ribosome-associated complex that mediates the extraction of incompletely synthesized nascent chains from stalled ribosomes and their subsequent degradation. Probably generates substrates for RQC. The sequence is that of Endonuclease MutS2 from Staphylococcus aureus (strain JH1).